The sequence spans 180 residues: SPbeta prophage-derived uncharacterized protein YosC (180 aa).

The polypeptide is SPbeta prophage-derived uncharacterized protein YosC (yosC) (Bacillus subtilis (strain 168)).